The sequence spans 151 residues: Internal scaffolding protein VP3 (151 aa).

Positions 120–151 (VETPQQAPQSTTNQTTTKPAPASGEPTPVPTP) are disordered. Residues 122-137 (TPQQAPQSTTNQTTTK) are compositionally biased toward polar residues.

Belongs to the microvidae B protein family.

The protein localises to the host cytoplasm. Functionally, participates in the assembly of the viral procapsid in the cytoplasm. Internal scaffolding protein VP3 is released from the procapsid upon genome packaging, possibly through affinity displacement by the protein VP8, or by proteolysis. This is Internal scaffolding protein VP3 from Bdellovibrio bacteriovorus (Bacteriophage phiMH2K).